Consider the following 323-residue polypeptide: Malate dehydrogenase (323 aa).

Residues 20–25 (GAGRVG) and aspartate 44 contribute to the NAD(+) site. The substrate site is built by arginine 93 and arginine 99. Residues asparagine 106 and 129 to 131 (VTN) contribute to the NAD(+) site. Substrate contacts are provided by asparagine 131 and arginine 162. The active-site Proton acceptor is histidine 186.

Belongs to the LDH/MDH superfamily. MDH type 3 family.

It catalyses the reaction (S)-malate + NAD(+) = oxaloacetate + NADH + H(+). Its function is as follows. Catalyzes the reversible oxidation of malate to oxaloacetate. This chain is Malate dehydrogenase, found in Nostoc sp. (strain PCC 7120 / SAG 25.82 / UTEX 2576).